The sequence spans 346 residues: Uroporphyrinogen decarboxylase (346 aa).

Residues 26 to 30 (RQAGR), Asp76, Tyr153, Ser208, and His323 each bind substrate.

It belongs to the uroporphyrinogen decarboxylase family. Homodimer.

The protein localises to the cytoplasm. It carries out the reaction uroporphyrinogen III + 4 H(+) = coproporphyrinogen III + 4 CO2. It functions in the pathway porphyrin-containing compound metabolism; protoporphyrin-IX biosynthesis; coproporphyrinogen-III from 5-aminolevulinate: step 4/4. In terms of biological role, catalyzes the decarboxylation of four acetate groups of uroporphyrinogen-III to yield coproporphyrinogen-III. In Prochlorococcus marinus (strain MIT 9312), this protein is Uroporphyrinogen decarboxylase.